Here is a 967-residue protein sequence, read N- to C-terminus: Siderophore exporter MmpL4 (967 aa).

11 consecutive transmembrane segments (helical) span residues 26–46, 210–230, 242–262, 303–323, 333–353, 384–404, 769–789, 793–813, 821–841, 875–895, and 913–934; these read AFAVPIILGWLAVCVVVTVFV, VIFIMLLLVYRSIITVVLLLI, VVAVLGHSGAIGLTTFAVSLL, AHVILGSGLTIAGATFCLSFA, IPCAVGMLVAVAVALTLGPAV, WPLPVLVATCAIALVGLLALP, WDLLIAAISSLCLIFIIMLII, FIAAAVIVGTVALSLGASFGL, ILAIHLHWLVLAMSVIVLLAV, VVTNAGLVFAVTMASMAVSDL, and TLIVRSFMTPSIAALLGRWFWW. The interval 943 to 967 is disordered; sequence ARTPTVPSETQPAGRPLAMSSDRLG.

It belongs to the resistance-nodulation-cell division (RND) (TC 2.A.6) family. MmpL subfamily. Interacts with MmpS4.

The protein resides in the cell inner membrane. In terms of biological role, part of an export system, which is required for biosynthesis and secretion of siderophores. The chain is Siderophore exporter MmpL4 (mmpL4) from Mycobacterium tuberculosis (strain CDC 1551 / Oshkosh).